The sequence spans 226 residues: Protein B (226 aa).

The igG constant region-binding stretch occupies residues 37–100 (DNVQGTDYEK…FSTQHLANKV (64 aa)). Repeats lie at residues 158–168 (TKSKLDKEIWN), 169–179 (TRFTRDKKVLN), and 180–190 (VKEFKVYNTLN).

It is found in the secreted. Its function is as follows. Protein B belongs to the group of bacterial Fc-binding protein. This chain is Protein B, found in Streptococcus agalactiae.